The following is a 353-amino-acid chain: UDP-galactose transporter (353 aa).

6 helical membrane passes run 147 to 167 (LGPM…IVQL), 184 to 204 (VTGF…GVYF), 215 to 235 (LWVR…FTIL), 254 to 274 (IVWL…LCVA), 279 to 299 (IMKN…SVYL), and 302 to 322 (FKIS…TFLY). The tract at residues 325 to 353 (PESKPSPSRGTYIPMTTQDAAAKDVDHKH) is disordered. The segment covering 329–343 (PSPSRGTYIPMTTQD) has biased composition (polar residues).

This sequence belongs to the nucleotide-sugar transporter family. SLC35A subfamily.

Its subcellular location is the golgi apparatus membrane. Essential for the transport of UDP-galactose into the lumen of Golgi apparatus. This Schizosaccharomyces pombe (strain 972 / ATCC 24843) (Fission yeast) protein is UDP-galactose transporter (gms1).